A 716-amino-acid polypeptide reads, in one-letter code: Myogenesis-regulating glycosidase (716 aa).

Residues 1–11 (MSQNLQETSQA) show a composition bias toward polar residues. Residues 1-26 (MSQNLQETSQAYPRHRPGSHAGPKSL) are disordered. The Cytoplasmic segment spans residues 1–55 (MSQNLQETSQAYPRHRPGSHAGPKSLKVTPRATMYTFLPDNFSPAKPKPTKELRP). Residues 56 to 76 (LLCSAVLGLLLVLAAVVAWCY) form a helical; Signal-anchor for type II membrane protein membrane-spanning segment. Residues 77–716 (YSASLRKAER…DEVAYFTWAS (640 aa)) lie on the Extracellular side of the membrane. N-linked (GlcNAc...) asparagine glycans are attached at residues asparagine 239, asparagine 249, and asparagine 455. Active-site residues include aspartate 462 and glutamate 465. Aspartate 527 functions as the Proton donor in the catalytic mechanism.

Belongs to the glycosyl hydrolase 31 family. In terms of assembly, interacts with IGF2; this interaction is required for IGF2 secretion. Expressed in brain, liver, spleen, skeletal muscle, heart, lung and kidney. High expression is observed in the cerebellum, specifically in astrocytes. Highly expressed in skeletal muscle (at protein level).

The protein localises to the nucleus membrane. Its subcellular location is the endoplasmic reticulum membrane. Its function is as follows. Putative glycosidase. Promotes myogenesis by activating AKT signaling through the maturation and secretion of IGF2. The chain is Myogenesis-regulating glycosidase (Myorg) from Mus musculus (Mouse).